A 444-amino-acid polypeptide reads, in one-letter code: Serine/threonine-protein kinase 2 (444 aa).

Positions 87–444 constitute a Protein kinase domain; sequence NRDFYHLSTG…WIDGKSTSHQ (358 aa). ATP is bound by residues 93–101 and Lys-118; that span reads LSTGGYGII. Asp-307 serves as the catalytic Proton acceptor.

It belongs to the protein kinase superfamily. Ser/Thr protein kinase family. Poxviruses subfamily. Post-translationally, phosphorylated in vivo. Autophosphorylated in vitro.

It localises to the host endoplasmic reticulum. The protein localises to the host endoplasmic reticulum-Golgi intermediate compartment. The catalysed reaction is L-seryl-[protein] + ATP = O-phospho-L-seryl-[protein] + ADP + H(+). It catalyses the reaction L-threonyl-[protein] + ATP = O-phospho-L-threonyl-[protein] + ADP + H(+). Its function is as follows. Essential serine-protein kinase involved in the early stage of virion morphogenesis. In Vertebrata (FPV), this protein is Serine/threonine-protein kinase 2 (OPG054).